The following is a 932-amino-acid chain: Glycine dehydrogenase (decarboxylating) (932 aa).

N6-(pyridoxal phosphate)lysine is present on Lys685.

The protein belongs to the GcvP family. As to quaternary structure, the glycine cleavage system is composed of four proteins: P, T, L and H. Pyridoxal 5'-phosphate serves as cofactor.

The enzyme catalyses N(6)-[(R)-lipoyl]-L-lysyl-[glycine-cleavage complex H protein] + glycine + H(+) = N(6)-[(R)-S(8)-aminomethyldihydrolipoyl]-L-lysyl-[glycine-cleavage complex H protein] + CO2. Functionally, the glycine cleavage system catalyzes the degradation of glycine. The P protein binds the alpha-amino group of glycine through its pyridoxal phosphate cofactor; CO(2) is released and the remaining methylamine moiety is then transferred to the lipoamide cofactor of the H protein. This chain is Glycine dehydrogenase (decarboxylating), found in Brucella suis (strain ATCC 23445 / NCTC 10510).